Consider the following 360-residue polypeptide: Heat-inducible transcription repressor HrcA (360 aa).

This sequence belongs to the HrcA family.

In terms of biological role, negative regulator of class I heat shock genes (grpE-dnaK-dnaJ and groELS operons). Prevents heat-shock induction of these operons. The chain is Heat-inducible transcription repressor HrcA from Mesorhizobium japonicum (strain LMG 29417 / CECT 9101 / MAFF 303099) (Mesorhizobium loti (strain MAFF 303099)).